Reading from the N-terminus, the 283-residue chain is Urease accessory protein UreD 2 (283 aa).

Residues 1–11 (MGRRAPDRLDR) show a composition bias toward basic and acidic residues. Positions 1–30 (MGRRAPDRLDRGVTTTSPRTQAPPQAGRGV) are disordered. The span at 13-23 (VTTTSPRTQAP) shows a compositional bias: polar residues.

This sequence belongs to the UreD family. UreD, UreF and UreG form a complex that acts as a GTP-hydrolysis-dependent molecular chaperone, activating the urease apoprotein by helping to assemble the nickel containing metallocenter of UreC. The UreE protein probably delivers the nickel.

It localises to the cytoplasm. Functionally, required for maturation of urease via the functional incorporation of the urease nickel metallocenter. This Saccharopolyspora erythraea (strain ATCC 11635 / DSM 40517 / JCM 4748 / NBRC 13426 / NCIMB 8594 / NRRL 2338) protein is Urease accessory protein UreD 2.